The primary structure comprises 408 residues: Glutathione-independent formaldehyde dehydrogenase (408 aa).

Zn(2+) is bound at residue C61. 3 residues coordinate NAD(+): G62, S63, and H66. Residues H82, C112, C115, C118, C126, and D184 each contribute to the Zn(2+) site. Residues V212, D232, R237, V277, H284, P311, L313, G348, and T350 each contribute to the NAD(+) site.

This sequence belongs to the zinc-containing alcohol dehydrogenase family. Requires Zn(2+) as cofactor.

It carries out the reaction formaldehyde + NAD(+) + H2O = formate + NADH + 2 H(+). With respect to regulation, activity is not inhibited by EDTA, which is probably not sufficient to displace the bound metal. Functionally, dehydrogenase that catalyzes the NAD(+)-dependent oxidation of formaldehyde. Exhibits lower activity with acetaldehyde (about 10-fold lower than for formaldehyde), but cannot use methanol, ethanol, 1-butanol, glyoxal or formic acid. Is involved in formaldehyde detoxification. This chain is Glutathione-independent formaldehyde dehydrogenase, found in Bacillus subtilis (strain 168).